The following is an 85-amino-acid chain: Large ribosomal subunit protein bL31B (85 aa).

This sequence belongs to the bacterial ribosomal protein bL31 family. Type B subfamily. Part of the 50S ribosomal subunit.

This is Large ribosomal subunit protein bL31B from Pseudarthrobacter chlorophenolicus (strain ATCC 700700 / DSM 12829 / CIP 107037 / JCM 12360 / KCTC 9906 / NCIMB 13794 / A6) (Arthrobacter chlorophenolicus).